The chain runs to 184 residues: MLDAFSRSVVSADAKTAPVGGSDLAGLRSYVRDGNKRLDAVNAITSNASCIVSDAVTGMICENTGLIQAGGNCYPNRRMAACLRDGEIVLRYISYALLAGDASVLDDRCLNGLKETYIALGVPTQSAGRAVAIMKASATAHIGETNTPGLGGKRFRKMETTQGDCAALVAEAGAYFDRVIGAIS.

Positions 50 and 61 each coordinate (2R,3E)-phycoerythrobilin. N72 bears the N4-methylasparagine mark. (2R,3E)-phycoerythrobilin-binding residues include C82 and C165.

Belongs to the phycobiliprotein family. As to quaternary structure, heterodimer of an alpha and a beta chain. Post-translationally, contains three covalently linked phycoerythrobilin chromophores.

It is found in the cellular thylakoid membrane. In terms of biological role, light-harvesting photosynthetic bile pigment-protein from the phycobiliprotein complex. The protein is C-phycoerythrin class 1 subunit beta (cpeB) of Synechococcus sp. (strain WH8020).